The following is a 308-amino-acid chain: UDP-N-acetylenolpyruvoylglucosamine reductase (308 aa).

In terms of domain architecture, FAD-binding PCMH-type spans 22–185 (RVGGPADWLF…VEAAFRADAG (164 aa)). The active site involves R165. Residues 197 to 211 (QIARRDSSQPTRDRS) show a composition bias toward basic and acidic residues. Positions 197–228 (QIARRDSSQPTRDRSAGSTFRNPAGFSSTGRA) are disordered. Residues 212-226 (AGSTFRNPAGFSSTG) show a composition bias toward polar residues. S214 functions as the Proton donor in the catalytic mechanism. E296 is a catalytic residue.

This sequence belongs to the MurB family. The cofactor is FAD.

The protein localises to the cytoplasm. The catalysed reaction is UDP-N-acetyl-alpha-D-muramate + NADP(+) = UDP-N-acetyl-3-O-(1-carboxyvinyl)-alpha-D-glucosamine + NADPH + H(+). The protein operates within cell wall biogenesis; peptidoglycan biosynthesis. Functionally, cell wall formation. The protein is UDP-N-acetylenolpyruvoylglucosamine reductase of Cereibacter sphaeroides (strain ATCC 17025 / ATH 2.4.3) (Rhodobacter sphaeroides).